Consider the following 210-residue polypeptide: Protein GET1 (210 aa).

Residues 1-4 (MPSL) lie on the Lumenal side of the membrane. Residues 5 to 24 (LIIVLIIHVVTYLINTIGAN) form a helical membrane-spanning segment. The Cytoplasmic portion of the chain corresponds to 25-110 (TIDSLLWLLY…SFDLAVKSVR (86 aa)). A coiled-coil region spans residues 39–95 (NQTSQTADEQRRLKREVMQLKREMNATSSQDEFAKWAKLRRRHDKTMEEYEAKNKAL). A helical membrane pass occupies residues 111–131 (FFSTTGLKLFLQFWFSKTPIF). Residues 132 to 155 (ELPRGWIPWQVEWVLSFPRAPLGT) are Lumenal-facing. Residues 156-172 (VSIQIWGGVCATVVSLA) form a helical membrane-spanning segment. The Cytoplasmic portion of the chain corresponds to 173–210 (GDAIGVVNVYLTSKAPKQKEPATSGENSARPMAIKKEL). A disordered region spans residues 189 to 210 (KQKEPATSGENSARPMAIKKEL).

The protein belongs to the WRB/GET1 family. In terms of assembly, interacts with GET3.

It is found in the endoplasmic reticulum membrane. Functionally, required for the post-translational delivery of tail-anchored (TA) proteins to the endoplasmic reticulum. Acts as a membrane receptor for soluble GET3, which recognizes and selectively binds the transmembrane domain of TA proteins in the cytosol. The polypeptide is Protein GET1 (Coccidioides posadasii (strain C735) (Valley fever fungus)).